The primary structure comprises 403 residues: Argininosuccinate synthase (403 aa).

8–16 (AYSGGLDTS) provides a ligand contact to ATP. Tyr87 contacts L-citrulline. Residue Gly117 coordinates ATP. Positions 119, 123, and 124 each coordinate L-aspartate. Residue Asn123 coordinates L-citrulline. L-citrulline is bound by residues Arg127, Ser175, Glu259, and Tyr271.

Belongs to the argininosuccinate synthase family. Type 1 subfamily. Homotetramer.

Its subcellular location is the cytoplasm. The enzyme catalyses L-citrulline + L-aspartate + ATP = 2-(N(omega)-L-arginino)succinate + AMP + diphosphate + H(+). Its pathway is amino-acid biosynthesis; L-arginine biosynthesis; L-arginine from L-ornithine and carbamoyl phosphate: step 2/3. In Salinispora arenicola (strain CNS-205), this protein is Argininosuccinate synthase.